The primary structure comprises 453 residues: Oocyte zinc finger protein XlCOF6 (453 aa).

C2H2-type zinc fingers lie at residues 6–29, 67–89, 95–117, 123–145, 151–173, 179–201, 207–229, 235–257, 263–285, 291–313, 319–341, 375–397, 403–425, and 431–453; these read FICS…CGKH, FTCT…HKTH, FTCM…YKAH, VRCT…KRLH, FACT…QRTH, FTCT…RRTH, FTCT…QITH, FTCT…QRTH, and FTCT…RITH.

It belongs to the krueppel C2H2-type zinc-finger protein family.

The protein resides in the nucleus. Its function is as follows. May be involved in transcriptional regulation. This is Oocyte zinc finger protein XlCOF6 from Xenopus laevis (African clawed frog).